Consider the following 310-residue polypeptide: Porphobilinogen deaminase (310 aa).

C242 is subject to S-(dipyrrolylmethanemethyl)cysteine.

It belongs to the HMBS family. As to quaternary structure, monomer. Dipyrromethane serves as cofactor.

The catalysed reaction is 4 porphobilinogen + H2O = hydroxymethylbilane + 4 NH4(+). The protein operates within porphyrin-containing compound metabolism; protoporphyrin-IX biosynthesis; coproporphyrinogen-III from 5-aminolevulinate: step 2/4. Its function is as follows. Tetrapolymerization of the monopyrrole PBG into the hydroxymethylbilane pre-uroporphyrinogen in several discrete steps. In Alcanivorax borkumensis (strain ATCC 700651 / DSM 11573 / NCIMB 13689 / SK2), this protein is Porphobilinogen deaminase.